Here is an 83-residue protein sequence, read N- to C-terminus: Beta/kappa-theraphotoxin-Cg2a (83 aa).

The N-terminal stretch at 1 to 21 (MKASVFAVILGLVVLCACSFA) is a signal peptide. Residues 22-53 (EDEQDQFVSPNELLKSMFVESRHEFTPEVEGR) constitute a propeptide that is removed on maturation. Cystine bridges form between cysteine 55-cysteine 69, cysteine 62-cysteine 74, and cysteine 68-cysteine 78. Isoleucine 82 carries the post-translational modification Isoleucine amide.

Belongs to the neurotoxin 30 (phrixotoxin) family. In terms of tissue distribution, expressed by the venom gland.

Its subcellular location is the secreted. Its function is as follows. This gating-modifier toxin shows an important inhibitory activity on sodium channels. It is very active on Nav1.7/SCN9A (IC(50)~0.6 nM), and also shows activity on Nav1.3/SCN3A (IC(50)=292 nM), Nav1.4/SCN4A (IC(50)=2.2-159 nM), and Nav1.5/SCN5A (IC(50)=2.3-2.9 uM). It has also been shown to inhibit tetrodotoxin (TTX)-resistant (IC(50)=27.6 nM) and TTX-sensitive (IC(50)=30.2 nM) sodium channels in rat dorsal root ganglion neurons. Lower inhibitory activity has also been shown on potassium channels: Kv4.2/KCND2 (IC(50)=604.2 nM), Kv4.3/KCND3 (IC(50)=425.1 nM), and Kv2.1/KCNB1 (IC(50)=14.3 uM). It binds to phospholipid membranes. Like its analog AM-8145, it may act by interacting only with the second voltage-sensor domain of Nav1.7/SCN9A. The chain is Beta/kappa-theraphotoxin-Cg2a from Chilobrachys guangxiensis (Chinese earth tiger tarantula).